The following is a 539-amino-acid chain: Glucose-6-phosphate isomerase (539 aa).

Glu-353 serves as the catalytic Proton donor. Active-site residues include His-384 and Lys-505.

This sequence belongs to the GPI family.

It is found in the cytoplasm. The enzyme catalyses alpha-D-glucose 6-phosphate = beta-D-fructose 6-phosphate. It participates in carbohydrate biosynthesis; gluconeogenesis. It functions in the pathway carbohydrate degradation; glycolysis; D-glyceraldehyde 3-phosphate and glycerone phosphate from D-glucose: step 2/4. Its function is as follows. Catalyzes the reversible isomerization of glucose-6-phosphate to fructose-6-phosphate. This Ralstonia pickettii (strain 12J) protein is Glucose-6-phosphate isomerase.